The primary structure comprises 190 residues: Elongation factor P (190 aa).

The protein belongs to the elongation factor P family.

The protein resides in the cytoplasm. The protein operates within protein biosynthesis; polypeptide chain elongation. Its function is as follows. Involved in peptide bond synthesis. Stimulates efficient translation and peptide-bond synthesis on native or reconstituted 70S ribosomes in vitro. Probably functions indirectly by altering the affinity of the ribosome for aminoacyl-tRNA, thus increasing their reactivity as acceptors for peptidyl transferase. The polypeptide is Elongation factor P (Pseudomonas fluorescens (strain ATCC BAA-477 / NRRL B-23932 / Pf-5)).